We begin with the raw amino-acid sequence, 1025 residues long: MRLAHALLPLLLQACWVATQDIQGSKAIAFQDCPVDLFFVLDTSESVALRLKPYGALVDKVKSFTKRFIDNLRDRYYRCDRNLVWNAGALHYSDEVEIIRGLTRMPSGRDELKASVDAVKYFGKGTYTDCAIKKGLEELLIGGSHLKENKYLIVVTDGHPLEGYKEPCGGLEDAVNEAKHLGIKVFSVAITPDHLEPRLSIIATDHTYRRNFTAADWGHSRDAEEVISQTIDTIVDMIKNNVEQVCCSFECQAARGPPGPRGDPGYEGERGKPGLPGEKGEAGDPGRPGDLGPVGYQGMKGEKGSRGEKGSRGPKGYKGEKGKRGIDGVDGMKGETGYPGLPGCKGSPGFDGIQGPPGPKGDAGAFGMKGEKGEAGADGEAGRPGNSGSPGDEGDPGEPGPPGEKGEAGDEGNAGPDGAPGERGGPGERGPRGTPGVRGPRGDPGEAGPQGDQGREGPVGIPGDSGEAGPIGPKGYRGDEGPPGPEGLRGAPGPVGPPGDPGLMGERGEDGPPGNGTEGFPGFPGYPGNRGPPGLNGTKGYPGLKGDEGEVGDPGEDNNDISPRGVKGAKGYRGPEGPQGPPGHVGPPGPDECEILDIIMKMCSCCECTCGPIDILFVLDSSESIGLQNFEIAKDFIIKVIDRLSKDELVKFEPGQSHAGVVQYSHNQMQEHVDMRSPNVRNAQDFKEAVKKLQWMAGGTFTGEALQYTRDRLLPPTQNNRIALVITDGRSDTQRDTTPLSVLCGADIQVVSVGIKDVFGFVAGSDQLNVISCQGLSQGRPGISLVKENYAELLDDGFLKNITAQICIDKKCPDYTCPITFSSPADITILLDSSASVGSHNFETTKVFAKRLAERFLSAGRADPSQDVRVAVVQYSGQGQQQPGRAALQFLQNYTVLASSVDSMDFINDATDVNDALSYVTRFYREASSGATKKRVLLFSDGNSQGATAEAIEKAVQEAQRAGIEIFVVVVGPQVNEPHIRVLVTGKTAEYDVAFGERHLFRVPNYQALLRGVLYQTVSRKVALG.

The first 19 residues, 1-19, serve as a signal peptide directing secretion; that stretch reads MRLAHALLPLLLQACWVAT. The interval 20 to 255 is N-terminal globular domain; it reads QDIQGSKAIA…CCSFECQAAR (236 aa). In terms of domain architecture, VWFA 1 spans 36–234; the sequence is DLFFVLDTSE…EVISQTIDTI (199 aa). Residue N211 is glycosylated (N-linked (GlcNAc...) asparagine). A disordered region spans residues 252–588; that stretch reads QAARGPPGPR…QGPPGHVGPP (337 aa). The triple-helical region stretch occupies residues 256–591; it reads GPPGPRGDPG…PGHVGPPGPD (336 aa). A Cell attachment site motif is present at residues 261-263; it reads RGD. 2 stretches are compositionally biased toward basic and acidic residues: residues 267 to 284 and 300 to 333; these read EGER…EAGD and KGEK…DGMK. 2 short sequence motifs (cell attachment site) span residues 441–443 and 477–479; these read RGD. N-linked (GlcNAc...) asparagine glycosylation is found at N515 and N536. The segment covering 549–559 has biased composition (acidic residues); the sequence is GEVGDPGEDNN. Residues 578–588 are compositionally biased toward pro residues; it reads PQGPPGHVGPP. Residues 592-1025 are C-terminal globular domain; the sequence is ECEILDIIMK…QTVSRKVALG (434 aa). 2 consecutive VWFA domains span residues 614–802 and 826–1018; these read DILF…LKNI and DITI…YQTV. Residues N801 and N893 are each glycosylated (N-linked (GlcNAc...) asparagine).

The protein belongs to the type VI collagen family. In terms of assembly, trimers composed of three different chains: alpha-1(VI), alpha-2(VI), and alpha-3(VI) or alpha-4(VI) or alpha-5(VI) or alpha-6(VI). Prolines at the third position of the tripeptide repeating unit (G-X-Y) are hydroxylated in some or all of the chains.

The protein localises to the secreted. The protein resides in the extracellular space. It localises to the extracellular matrix. Its function is as follows. Collagen VI acts as a cell-binding protein. In Mus musculus (Mouse), this protein is Collagen alpha-1(VI) chain (Col6a1).